Here is a 275-residue protein sequence, read N- to C-terminus: Polyamine aminopropyltransferase (275 aa).

The region spanning 2–235 (HLWFTEKQND…AMWSFTIGSK (234 aa)) is the PABS domain. Residue Gln31 coordinates S-methyl-5'-thioadenosine. Residues His62 and Asp86 each coordinate spermidine. S-methyl-5'-thioadenosine contacts are provided by residues Glu106 and 137 to 138 (DG). Asp155 functions as the Proton acceptor in the catalytic mechanism. 155–158 (DSTD) contacts spermidine. Position 162 (Pro162) interacts with S-methyl-5'-thioadenosine.

It belongs to the spermidine/spermine synthase family. As to quaternary structure, homodimer or homotetramer.

The protein resides in the cytoplasm. The enzyme catalyses S-adenosyl 3-(methylsulfanyl)propylamine + putrescine = S-methyl-5'-thioadenosine + spermidine + H(+). Its pathway is amine and polyamine biosynthesis; spermidine biosynthesis; spermidine from putrescine: step 1/1. In terms of biological role, catalyzes the irreversible transfer of a propylamine group from the amino donor S-adenosylmethioninamine (decarboxy-AdoMet) to putrescine (1,4-diaminobutane) to yield spermidine. In Desulforudis audaxviator (strain MP104C), this protein is Polyamine aminopropyltransferase.